The following is a 358-amino-acid chain: MSVQNVVLFDTQPLTLMLGGKLSHINVAYQTYGTLNAEKNNAVLICHALTGDAEPYFDDGRDGWWQNFMGAGLALDTDRYFFISSNVLGGCKGTTGPSSINPQTGKPYGSQFPNIVVQDIVKVQKALLEHLGISHLKAIIGGSFGGMQANQWAIDYPDFMDNIVNLCSSIYFSAEAIGFNHVMRQAVINDPNFNGGDYYEGTPPDQGLSIARMLGMLTYRTDLQLAKAFGRATKSDGSFWGDYFQVESYLSYQGKKFLERFDANSYLHLLRALDMYDPSLGYENVKEALSRIKARYTLVSVTTDQLFKPIDLYKSKQLLEQSGVDLHFYEFPSDYGHDAFLVDYDQFEKRIRDGLAGN.

The 303-residue stretch at 41–343 (NAVLICHALT…DYGHDAFLVD (303 aa)) folds into the AB hydrolase-1 domain. Catalysis depends on Ser143, which acts as the Nucleophile. Arg212 contacts substrate. Residues Asp304 and His337 contribute to the active site. Asp338 contributes to the substrate binding site.

Belongs to the AB hydrolase superfamily. MetX family. In terms of assembly, homodimer.

It is found in the cytoplasm. The enzyme catalyses L-homoserine + acetyl-CoA = O-acetyl-L-homoserine + CoA. It functions in the pathway amino-acid biosynthesis; L-methionine biosynthesis via de novo pathway; O-acetyl-L-homoserine from L-homoserine: step 1/1. In terms of biological role, transfers an acetyl group from acetyl-CoA to L-homoserine, forming acetyl-L-homoserine. The polypeptide is Homoserine O-acetyltransferase (Haemophilus influenzae (strain 86-028NP)).